The sequence spans 301 residues: D-alanine--D-alanine ligase (301 aa).

The region spanning 99–294 (KCILKAANIR…FSELIDMIID (196 aa)) is the ATP-grasp domain. 126–181 (IEGMGYPVVVKPTHGGSSVATFIIKEEKDIKNAVTEAFKWDSEVIIEKFIKGDEIT) lines the ATP pocket. Mg(2+) is bound by residues Asp248, Glu261, and Asn263.

This sequence belongs to the D-alanine--D-alanine ligase family. Requires Mg(2+) as cofactor. Mn(2+) is required as a cofactor.

The protein resides in the cytoplasm. It carries out the reaction 2 D-alanine + ATP = D-alanyl-D-alanine + ADP + phosphate + H(+). It functions in the pathway cell wall biogenesis; peptidoglycan biosynthesis. In terms of biological role, cell wall formation. In Clostridium botulinum (strain Eklund 17B / Type B), this protein is D-alanine--D-alanine ligase.